The following is a 243-amino-acid chain: Ras-related protein Rab-12 (243 aa).

The residue at position 1 (M1) is an N-acetylmethionine. The segment at 1-36 (MDPSAALHRRPAGGGLGAVSPALSGGQARRRKQPPR) is disordered. S20 and S24 each carry phosphoserine. Positions 51, 52, 53, 54, 55, 72, and 73 each coordinate GTP. Residue T55 participates in Mg(2+) binding. 2 short sequence motifs (switch) span residues 64-78 (DTFC…GVDF) and 96-113 (DTAG…YYRS). Mg(2+)-binding residues include T73 and D96. G99 contacts GTP. S105 carries the post-translational modification Phosphoserine. Positions 154, 155, 157, 185, 186, and 187 each coordinate GTP. 2 S-geranylgeranyl cysteine lipidation sites follow: C242 and C243.

The protein belongs to the small GTPase superfamily. Rab family. As to quaternary structure, interacts with RABIF and OPTN. Interacts with LRRK2; interaction facilitates phosphorylation of Ser-105. Interacts with GDI1, GDI2 and CHM; these interactions are disrupted by phosphorylation on Ser-105. Interacts with RILPL1 and RILPL2; these interactions are dependent on phosphorylation of Ser-105. The cofactor is Mg(2+). In terms of processing, phosphorylation of Ser-105 in the switch II region by LRRK2 prevents the association of RAB regulatory proteins, including CHM and RAB GDP dissociation inhibitors GDI1 and GDI2. Highest levels in skeletal and cardiac muscle. Also found in comparable amounts in brain, spinal cord and lung. Also detected in testis where it is expressed by Sertoli cells of the seminiferous tubules (at protein level).

It localises to the recycling endosome membrane. The protein resides in the lysosome membrane. Its subcellular location is the golgi apparatus membrane. It is found in the cytoplasmic vesicle. The protein localises to the autophagosome. The catalysed reaction is GTP + H2O = GDP + phosphate + H(+). With respect to regulation, regulated by guanine nucleotide exchange factors (GEFs) including DENND3 which promote the exchange of bound GDP for free GTP. Regulated by GTPase activating proteins (GAPs) which increase the GTP hydrolysis activity. Inhibited by GDP dissociation inhibitors (GDIs). Functionally, the small GTPases Rab are key regulators of intracellular membrane trafficking, from the formation of transport vesicles to their fusion with membranes. Rabs cycle between an inactive GDP-bound form and an active GTP-bound form that is able to recruit to membranes different sets of downstream effectors directly responsible for vesicle formation, movement, tethering and fusion. RAB12 may play a role in protein transport from recycling endosomes to lysosomes regulating, for instance, the degradation of the transferrin receptor. Involved in autophagy. This Rattus norvegicus (Rat) protein is Ras-related protein Rab-12.